The following is a 262-amino-acid chain: Probable ketoamine kinase TTHA1179 (262 aa).

79 to 81 (AYL) provides a ligand contact to ATP. Asp172 functions as the Proton acceptor in the catalytic mechanism.

The protein belongs to the fructosamine kinase family.

It catalyses the reaction N(6)-(D-ribulosyl)-L-lysine + ATP = N(6)-(3-O-phospho-D-ribulosyl)-L-lysine + ADP + H(+). The catalysed reaction is N(6)-(D-erythrulosyl)-L-lysine + ATP = N(6)-(3-O-phospho-D-erythrulosyl)-L-lysine + ADP + H(+). It carries out the reaction N(6)-D-ribulosyl-L-lysyl-[protein] + ATP = N(6)-(3-O-phospho-D-ribulosyl)-L-lysyl-[protein] + ADP + H(+). The enzyme catalyses N(6)-(D-erythrulosyl)-L-lysyl-[protein] + ATP = N(6)-(3-O-phospho-D-erythrulosyl)-L-lysyl-[protein] + ADP + H(+). Ketoamine kinase that phosphorylates ketoamines, such as erythruloselysine and ribuloselysine, on the third carbon of the sugar moiety to generate ketoamine 3-phosphate. Has higher activity on free lysine (erythruloselysine and ribuloselysine), than on ribuloselysine and erythruloselysine residues on glycated proteins. This chain is Probable ketoamine kinase TTHA1179, found in Thermus thermophilus (strain ATCC 27634 / DSM 579 / HB8).